A 56-amino-acid polypeptide reads, in one-letter code: Large ribosomal subunit protein bL32 (56 aa).

A disordered region spans residues 1-21; sequence MAVQKNKPTRSKRGMRRSHDA. The span at 7–16 shows a compositional bias: basic residues; the sequence is KPTRSKRGMR.

Belongs to the bacterial ribosomal protein bL32 family.

In Hamiltonella defensa subsp. Acyrthosiphon pisum (strain 5AT), this protein is Large ribosomal subunit protein bL32.